The primary structure comprises 177 residues: Large ribosomal subunit protein uL6 (177 aa).

It belongs to the universal ribosomal protein uL6 family. In terms of assembly, part of the 50S ribosomal subunit.

This protein binds to the 23S rRNA, and is important in its secondary structure. It is located near the subunit interface in the base of the L7/L12 stalk, and near the tRNA binding site of the peptidyltransferase center. In Methylocella silvestris (strain DSM 15510 / CIP 108128 / LMG 27833 / NCIMB 13906 / BL2), this protein is Large ribosomal subunit protein uL6.